The following is a 185-amino-acid chain: Peptidyl-tRNA hydrolase (185 aa).

Y14 contacts tRNA. Residue H19 is the Proton acceptor of the active site. 3 residues coordinate tRNA: F63, N65, and N111.

The protein belongs to the PTH family. As to quaternary structure, monomer.

The protein resides in the cytoplasm. The enzyme catalyses an N-acyl-L-alpha-aminoacyl-tRNA + H2O = an N-acyl-L-amino acid + a tRNA + H(+). Hydrolyzes ribosome-free peptidyl-tRNAs (with 1 or more amino acids incorporated), which drop off the ribosome during protein synthesis, or as a result of ribosome stalling. Functionally, catalyzes the release of premature peptidyl moieties from peptidyl-tRNA molecules trapped in stalled 50S ribosomal subunits, and thus maintains levels of free tRNAs and 50S ribosomes. The chain is Peptidyl-tRNA hydrolase from Desulfitobacterium hafniense (strain Y51).